The primary structure comprises 226 residues: Transcriptional regulatory protein PcoR (226 aa).

The region spanning 3–117 (RILIVEDEQK…ELVARVRTLL (115 aa)) is the Response regulatory domain. At Asp52 the chain carries 4-aspartylphosphate. The segment at residues 125–223 (ATVCTIADMT…VRGAGYVLEI (99 aa)) is a DNA-binding region (ompR/PhoB-type).

Phosphorylated by PcoS.

It is found in the cytoplasm. Probable member of a two-component regulatory system PcoS/PcoR. May be involved in the activation of copper resistance gene operon pcoABCD by binding to a specific site on the cop operon promoter (copper box). The sequence is that of Transcriptional regulatory protein PcoR (pcoR) from Escherichia coli.